The primary structure comprises 457 residues: Ribulose bisphosphate carboxylase-like protein (457 aa).

Mg(2+) contacts are provided by K199, D201, and E202. K199 is modified (N6-carboxylysine). Positions 426–457 (AIAAFGKPAHGQAASPQPSEQASEPDAAGGDS) are disordered.

Belongs to the RuBisCO large chain family. Type IV subfamily. It depends on Mg(2+) as a cofactor.

In terms of biological role, may be involved in sulfur metabolism and oxidative stress response. Does not show RuBisCO activity. In Allochromatium vinosum (strain ATCC 17899 / DSM 180 / NBRC 103801 / NCIMB 10441 / D) (Chromatium vinosum), this protein is Ribulose bisphosphate carboxylase-like protein.